Consider the following 323-residue polypeptide: Protoheme IX farnesyltransferase (323 aa).

Helical transmembrane passes span 28–48 (IIPL…NGQV), 50–70 (PVLL…AQTL), 99–119 (HALI…VVFV), 122–142 (ASAL…THML), 150–170 (IVIG…AVTG), 178–198 (ALFA…ALMI), 223–243 (IWIY…PLAA), 244–264 (SGIV…YKTW), and 279–299 (LFKY…VDSL).

It belongs to the UbiA prenyltransferase family. Protoheme IX farnesyltransferase subfamily.

It localises to the cell inner membrane. The catalysed reaction is heme b + (2E,6E)-farnesyl diphosphate + H2O = Fe(II)-heme o + diphosphate. Its pathway is porphyrin-containing compound metabolism; heme O biosynthesis; heme O from protoheme: step 1/1. In terms of biological role, converts heme B (protoheme IX) to heme O by substitution of the vinyl group on carbon 2 of heme B porphyrin ring with a hydroxyethyl farnesyl side group. The polypeptide is Protoheme IX farnesyltransferase (Gloeothece citriformis (strain PCC 7424) (Cyanothece sp. (strain PCC 7424))).